We begin with the raw amino-acid sequence, 101 residues long: MGNPVVIKAKKDYDCVFEPEPMSWLRLQYYRYQVTAGTYLFTYKEAFVFNTVVFIIVFLTGWAAKSIIVKLLPSLWRLSTLIPSFFASFFMSLLGKDASSQ.

2 consecutive transmembrane segments (helical) span residues 52 to 72 and 75 to 95; these read VVFIIVFLTGWAAKSIIVKLL and LWRLSTLIPSFFASFFMSLLG.

Its subcellular location is the endoplasmic reticulum membrane. This is an uncharacterized protein from Schizosaccharomyces pombe (strain 972 / ATCC 24843) (Fission yeast).